A 470-amino-acid polypeptide reads, in one-letter code: Uronate isomerase (470 aa).

The protein belongs to the metallo-dependent hydrolases superfamily. Uronate isomerase family.

The enzyme catalyses D-glucuronate = D-fructuronate. The catalysed reaction is aldehydo-D-galacturonate = keto-D-tagaturonate. It participates in carbohydrate metabolism; pentose and glucuronate interconversion. This is Uronate isomerase from Escherichia fergusonii (strain ATCC 35469 / DSM 13698 / CCUG 18766 / IAM 14443 / JCM 21226 / LMG 7866 / NBRC 102419 / NCTC 12128 / CDC 0568-73).